The primary structure comprises 401 residues: MNEVVQSPAIQPLPKSAPTAGKQNLLDLDRAGLEKFFVEVLGEKKFRAHQVMKWIHHRYVTDFDEMTDLGKVLRAKLQAHAEVLVPNIVFDKPSADGTHKWLLAMGVDGKNAIETVYIPDKTRGTLCVSSQVGCGLNCTFCSTATQGFNRNLTTAEIIGQVWVAARHLGNVPHQMRRLTNVVMMGMGEPLMNFDNVVRAMSVMRDDLGYGLANKRVTLSTSGLVPQIDRLSAESDVSLAVSLHAPNDALRETLVPLNKKYPIAELMASCARYLRANKRRESVTFEYTLMKGINDKPEHARELARLMRQFDNAVQAKDSGKVNLIPFNPFPGTRYERSEEAHIRAFQKILLDSNVLTMVRRTRGDDIDAACGQLKGQVMDRTRRQAEFNKTLQAGKGSDAAA.

Catalysis depends on E114, which acts as the Proton acceptor. One can recognise a Radical SAM core domain in the interval 120-365 (DKTRGTLCVS…TMVRRTRGDD (246 aa)). Residues C127 and C370 are joined by a disulfide bond. Positions 134, 138, and 141 each coordinate [4Fe-4S] cluster. Residues 187-188 (GE), S219, 241-243 (SLH), and N327 each bind S-adenosyl-L-methionine. Catalysis depends on C370, which acts as the S-methylcysteine intermediate.

This sequence belongs to the radical SAM superfamily. RlmN family. The cofactor is [4Fe-4S] cluster.

The protein localises to the cytoplasm. It carries out the reaction adenosine(2503) in 23S rRNA + 2 reduced [2Fe-2S]-[ferredoxin] + 2 S-adenosyl-L-methionine = 2-methyladenosine(2503) in 23S rRNA + 5'-deoxyadenosine + L-methionine + 2 oxidized [2Fe-2S]-[ferredoxin] + S-adenosyl-L-homocysteine. The catalysed reaction is adenosine(37) in tRNA + 2 reduced [2Fe-2S]-[ferredoxin] + 2 S-adenosyl-L-methionine = 2-methyladenosine(37) in tRNA + 5'-deoxyadenosine + L-methionine + 2 oxidized [2Fe-2S]-[ferredoxin] + S-adenosyl-L-homocysteine. Specifically methylates position 2 of adenine 2503 in 23S rRNA and position 2 of adenine 37 in tRNAs. m2A2503 modification seems to play a crucial role in the proofreading step occurring at the peptidyl transferase center and thus would serve to optimize ribosomal fidelity. The chain is Dual-specificity RNA methyltransferase RlmN from Stenotrophomonas maltophilia (strain K279a).